The primary structure comprises 568 residues: Sulfite reductase [NADPH] hemoprotein beta-component (568 aa).

Residues cysteine 425, cysteine 431, cysteine 470, and cysteine 474 each coordinate [4Fe-4S] cluster. Cysteine 474 contacts siroheme.

The protein belongs to the nitrite and sulfite reductase 4Fe-4S domain family. As to quaternary structure, alpha(8)-beta(8). The alpha component is a flavoprotein, the beta component is a hemoprotein. Siroheme serves as cofactor. [4Fe-4S] cluster is required as a cofactor.

It carries out the reaction hydrogen sulfide + 3 NADP(+) + 3 H2O = sulfite + 3 NADPH + 4 H(+). It participates in sulfur metabolism; hydrogen sulfide biosynthesis; hydrogen sulfide from sulfite (NADPH route): step 1/1. Component of the sulfite reductase complex that catalyzes the 6-electron reduction of sulfite to sulfide. This is one of several activities required for the biosynthesis of L-cysteine from sulfate. This chain is Sulfite reductase [NADPH] hemoprotein beta-component, found in Xanthomonas euvesicatoria pv. vesicatoria (strain 85-10) (Xanthomonas campestris pv. vesicatoria).